The chain runs to 181 residues: uncharacterized protein (181 aa).

The segment at 151 to 181 (AQKKKDFQEPENKHEQLTSTKAPCQENWSDF) is disordered. Positions 154–166 (KKDFQEPENKHEQ) are enriched in basic and acidic residues. Over residues 167 to 181 (LTSTKAPCQENWSDF) the composition is skewed to polar residues.

This is an uncharacterized protein from Caenorhabditis elegans.